We begin with the raw amino-acid sequence, 719 residues long: Putative RNA-binding protein involved in heterochromatin assembly (719 aa).

One can recognise an RRM domain in the interval 226–322 (KILYMNNLPP…NLANTKQPRV (97 aa)). Serine 345 carries the phosphoserine modification. The segment at 355–384 (RPGDWNCPSCGFSNFQRRTACFRCSFPAPS) adopts a RanBP2-type 1 zinc-finger fold. The segment at 389 to 415 (HTANSNNNVNSSRNNLNNRVNSGSSSN) is disordered. The segment covering 392-415 (NSNNNVNSSRNNLNNRVNSGSSSN) has biased composition (low complexity). Serine 455 is modified (phosphoserine). Positions 511 to 561 (NNNINGNGNGNGNNSNNNNNHNNNHNNNHHNGSINSNSNTNNNNNNNNGNN) are disordered. The segment at 581 to 610 (RAGDWKCSTCTYHNFAKNVVCLRCGGPKSI) adopts a RanBP2-type 2 zinc-finger fold. Over residues 622 to 649 (DSSTFGPASRTPSNNNISVNTNGGSNAG) the composition is skewed to polar residues. The tract at residues 622–661 (DSSTFGPASRTPSNNNISVNTNGGSNAGRTDGNDNKGRDI) is disordered. Position 630 is a phosphoserine (serine 630). The span at 652–661 (DGNDNKGRDI) shows a compositional bias: basic and acidic residues.

The protein resides in the chromosome. It localises to the nucleus. In terms of biological role, may play a role in chromatin organization. The polypeptide is Putative RNA-binding protein involved in heterochromatin assembly (Saccharomyces cerevisiae (strain ATCC 204508 / S288c) (Baker's yeast)).